A 235-amino-acid polypeptide reads, in one-letter code: Pyridoxine 5'-phosphate synthase (235 aa).

N7 is a 3-amino-2-oxopropyl phosphate binding site. 9–10 lines the 1-deoxy-D-xylulose 5-phosphate pocket; that stretch reads DH. R18 is a 3-amino-2-oxopropyl phosphate binding site. H43 acts as the Proton acceptor in catalysis. 1-deoxy-D-xylulose 5-phosphate-binding residues include R45 and H50. E70 functions as the Proton acceptor in the catalytic mechanism. T100 serves as a coordination point for 1-deoxy-D-xylulose 5-phosphate. The Proton donor role is filled by H187. 3-amino-2-oxopropyl phosphate is bound by residues G188 and 209 to 210; that span reads GH.

The protein belongs to the PNP synthase family. In terms of assembly, homooctamer; tetramer of dimers.

It localises to the cytoplasm. It catalyses the reaction 3-amino-2-oxopropyl phosphate + 1-deoxy-D-xylulose 5-phosphate = pyridoxine 5'-phosphate + phosphate + 2 H2O + H(+). It functions in the pathway cofactor biosynthesis; pyridoxine 5'-phosphate biosynthesis; pyridoxine 5'-phosphate from D-erythrose 4-phosphate: step 5/5. In terms of biological role, catalyzes the complicated ring closure reaction between the two acyclic compounds 1-deoxy-D-xylulose-5-phosphate (DXP) and 3-amino-2-oxopropyl phosphate (1-amino-acetone-3-phosphate or AAP) to form pyridoxine 5'-phosphate (PNP) and inorganic phosphate. This chain is Pyridoxine 5'-phosphate synthase, found in Desulfatibacillum aliphaticivorans.